The following is a 197-amino-acid chain: Probable NADPH:quinone oxidoreductase 1 (197 aa).

Belongs to the SsuE family. In terms of assembly, homotetramer. It depends on FMN as a cofactor.

It carries out the reaction a quinone + NADH + H(+) = a quinol + NAD(+). The enzyme catalyses a quinone + NADPH + H(+) = a quinol + NADP(+). Its function is as follows. The enzyme apparently serves as a quinone reductase in connection with conjugation reactions of hydroquinones involved in detoxification pathways. The chain is Probable NADPH:quinone oxidoreductase 1 from Oryza sativa subsp. japonica (Rice).